A 311-amino-acid chain; its full sequence is MTRHFLVDTDLNPQEQTEVLDLALQLKRNPYLRQPFAGVGAGRKTVAVIFDKTSTRTRVSFAAGISELGGTPLIIGAGESQLGHKESIADTAKVLERMVATIVWRTFAQVGLEEMAANSKVPVINALSDDYHPCQLLADLLTIKEHKGGLKGLTMTYLGDGANNMANSYLLAGVTAGMHVRIAAPAEYQPDESVVRDALNRADETGGSVLVTTDPRLAASGADVLATDTWVSMGQEDEKASRAEIFKPYALDAAALALAAADAVVLHCLPAYRGYEIAAEVIDGPQSVVWDEAENRLHAQKALMAWLVERS.

Residues 54–57, Q81, R105, and 132–135 contribute to the carbamoyl phosphate site; these read STRT and HPCQ. Residues N164, D228, and 232–233 contribute to the L-ornithine site; that span reads SM. Carbamoyl phosphate is bound by residues 268–269 and R296; that span reads CL.

Belongs to the aspartate/ornithine carbamoyltransferase superfamily. OTCase family.

It is found in the cytoplasm. The catalysed reaction is carbamoyl phosphate + L-ornithine = L-citrulline + phosphate + H(+). The protein operates within amino-acid biosynthesis; L-arginine biosynthesis; L-arginine from L-ornithine and carbamoyl phosphate: step 1/3. Functionally, reversibly catalyzes the transfer of the carbamoyl group from carbamoyl phosphate (CP) to the N(epsilon) atom of ornithine (ORN) to produce L-citrulline. In Renibacterium salmoninarum (strain ATCC 33209 / DSM 20767 / JCM 11484 / NBRC 15589 / NCIMB 2235), this protein is Ornithine carbamoyltransferase.